The chain runs to 183 residues: Protein Syd (183 aa).

Belongs to the Syd family.

Its subcellular location is the cell inner membrane. In terms of biological role, interacts with the SecY protein in vivo. May bind preferentially to an uncomplexed state of SecY, thus functioning either as a chelating agent for excess SecY in the cell or as a regulatory factor that negatively controls the translocase function. This is Protein Syd from Aliivibrio fischeri (strain ATCC 700601 / ES114) (Vibrio fischeri).